Consider the following 138-residue polypeptide: MNTETKSLPAWLDKVRWDDNGLVPVIAQEASTNDVLMFAWMNREALAKTIETQRAVYYSRSRKRLWFKGEESGHVQHVHEVRLDCDEDVVLLKVEQVSGIACHTGRHSCFFQKFEGTVDGGDWVAVEPVLKDPEHIYK.

Asp-84 contacts Mg(2+). Cys-85 is a Zn(2+) binding site. 2 residues coordinate Mg(2+): Asp-86 and Asp-88. Zn(2+) contacts are provided by Cys-102 and Cys-109.

It belongs to the PRA-CH family. Homodimer. Requires Mg(2+) as cofactor. It depends on Zn(2+) as a cofactor.

Its subcellular location is the cytoplasm. It catalyses the reaction 1-(5-phospho-beta-D-ribosyl)-5'-AMP + H2O = 1-(5-phospho-beta-D-ribosyl)-5-[(5-phospho-beta-D-ribosylamino)methylideneamino]imidazole-4-carboxamide. Its pathway is amino-acid biosynthesis; L-histidine biosynthesis; L-histidine from 5-phospho-alpha-D-ribose 1-diphosphate: step 3/9. Its function is as follows. Catalyzes the hydrolysis of the adenine ring of phosphoribosyl-AMP. This Burkholderia orbicola (strain MC0-3) protein is Phosphoribosyl-AMP cyclohydrolase.